A 78-amino-acid chain; its full sequence is Mandibular organ-inhibiting hormone 2 (78 aa).

3 disulfide bridges follow: C7–C44, C24–C40, and C27–C53.

It belongs to the arthropod CHH/MIH/GIH/VIH hormone family. In terms of tissue distribution, produced by the medulla terminalis X-organ in the eyestalks and transported to the sinus gland where it is stored and released.

It localises to the secreted. In terms of biological role, represses the synthesis of methyl farnesoate, the precursor of insect juvenile hormone III in the mandibular organ. The sequence is that of Mandibular organ-inhibiting hormone 2 from Cancer pagurus (Rock crab).